The sequence spans 254 residues: DNA repair protein RecO (254 aa).

Belongs to the RecO family.

In terms of biological role, involved in DNA repair and RecF pathway recombination. The polypeptide is DNA repair protein RecO (Agrobacterium fabrum (strain C58 / ATCC 33970) (Agrobacterium tumefaciens (strain C58))).